Reading from the N-terminus, the 37-residue chain is Large ribosomal subunit protein bL36 (37 aa).

This sequence belongs to the bacterial ribosomal protein bL36 family.

The protein is Large ribosomal subunit protein bL36 of Endomicrobium trichonymphae.